A 485-amino-acid polypeptide reads, in one-letter code: Probable cobyric acid synthase (485 aa).

The 186-residue stretch at 250-435 folds into the GATase cobBQ-type domain; that stretch reads EIEVAVIRLP…LHGLFDNRNI (186 aa). Cys-328 serves as the catalytic Nucleophile. His-427 is an active-site residue.

Belongs to the CobB/CobQ family. CobQ subfamily.

It participates in cofactor biosynthesis; adenosylcobalamin biosynthesis. Its function is as follows. Catalyzes amidations at positions B, D, E, and G on adenosylcobyrinic A,C-diamide. NH(2) groups are provided by glutamine, and one molecule of ATP is hydrogenolyzed for each amidation. This is Probable cobyric acid synthase from Methanosarcina mazei (strain ATCC BAA-159 / DSM 3647 / Goe1 / Go1 / JCM 11833 / OCM 88) (Methanosarcina frisia).